Here is a 125-residue protein sequence, read N- to C-terminus: MNVLYTKIFFILILTRTSSALKCVQCFTGYGNIVQDCNKTSYSEPKECADPLSNYCFIGTRYENGTEYIQRYCAIFSIKDQCIEKNNIKACIYTCETDGCNSASRLQISSLVTSIISVLYLITFX.

A signal peptide spans 1 to 20; sequence MNVLYTKIFFILILTRTSSA.

It belongs to the scoloptoxin-05 family. Contains 4 disulfide bonds. As to expression, expressed by the venom gland.

The protein resides in the secreted. The chain is U-scoloptoxin(05)-Sm1a from Scolopendra morsitans (Tanzanian blue ringleg centipede).